The following is a 590-amino-acid chain: Acyl-CoA ligase sidI (590 aa).

A PTS2-type peroxisomal targeting signal motif is present at residues 6–14 (RLQQTLSHL). ATP contacts are provided by residues 220 to 228 (TSGSTGNPK), 359 to 364 (SSYGLT), Asp-449, and Arg-464. Residue Thr-364 participates in substrate binding. CoA contacts are provided by residues 472-474 (GGE) and 543-545 (YFF). Lys-563 is a binding site for ATP.

The protein belongs to the ATP-dependent AMP-binding enzyme family.

It is found in the peroxisome. Its pathway is siderophore biosynthesis. Its function is as follows. Acyl-CoA ligase; part of the siderophore biosynthetic pathway. Aspergillus fumigatus produces 4 types of siderophores, low-molecular-mass iron chelators, including excreted fusarinine C (FsC) and triacetylfusarinine C (TAFC) for iron uptake and intacellular ferricrocin (FC) for hyphal and hydroxyferricrocin (HFC) for conidial iron distribution and storage. TAFC consists of 3 N(2)-acetyl-N(5)-anhydromevalonyl-N(5)-hydroxyornithine residues cyclically linked by ester bonds; FC is a cyclic hexapeptide with the structure Gly-Ser-Gly-(N(5)-acetyl-N(5)-hydroxyornithine)x3. The biosynthesis of all four siderophores depends on the hydroxylation of ornithine, catalyzed by the monooxygenase sidA. Subsequently, the pathways for biosynthesis of extra- and intracellular siderophores split. For biosynthesis of extracellular siderophores, the transacylase sidF transfers anhydromevalonyl to N(5)-hydroxyornithine. The required anhydromevalonyl-CoA moiety is derived from mevalonate by CoA ligation and dehydration catalyzed by sidI and sidH respectively. The acetylation of N(5)-hydroxyornithine for FC biosynthesis involves the constitutively expressed sidL. FC is hydroxylated to HFC by an as yet uncharacterized enzyme during conidiation. Assembly of fusarinine C (FsC) and FC is catalyzed by two different nonribosomal peptide synthetases (NRPS), sidD and sidC respectively. Subsequently, sidG catalyzes N2-acetylation of FsC for forming TAFC. Both extra- and intracellular siderophores are crucial for growth during iron limitation and virulence. The protein is Acyl-CoA ligase sidI of Aspergillus fumigatus (strain ATCC MYA-4609 / CBS 101355 / FGSC A1100 / Af293) (Neosartorya fumigata).